We begin with the raw amino-acid sequence, 392 residues long: Putative glutamate--cysteine ligase 2 (392 aa).

A disordered region spans residues 347-367 (AARKHGAAPEPGTRTRGDDGV).

Belongs to the glutamate--cysteine ligase type 2 family. YbdK subfamily.

The catalysed reaction is L-cysteine + L-glutamate + ATP = gamma-L-glutamyl-L-cysteine + ADP + phosphate + H(+). Functionally, ATP-dependent carboxylate-amine ligase which exhibits weak glutamate--cysteine ligase activity. This is Putative glutamate--cysteine ligase 2 from Corynebacterium jeikeium (strain K411).